We begin with the raw amino-acid sequence, 191 residues long: ADP-ribosylation factor (191 aa).

G2 carries the N-myristoyl glycine lipid modification. Residues 24 to 31, 67 to 71, and 128 to 131 contribute to the GTP site; these read GLDAAGKT, DVGGQ, and NKQD.

This sequence belongs to the small GTPase superfamily. Arf family.

The protein localises to the golgi apparatus. Its function is as follows. GTP-binding protein involved in protein trafficking; may modulate vesicle budding and uncoating within the Golgi apparatus. This is ADP-ribosylation factor from Giardia intestinalis (Giardia lamblia).